The following is a 525-amino-acid chain: Protein kinase PINOID 2 (525 aa).

Positions 1-27 (MANSSIFYKDNESDYESSTVGPDSSRR) are disordered. The 379-residue stretch at 87 to 465 (FRLLKRLGSG…SIEIKRHEFF (379 aa)) folds into the Protein kinase domain. ATP-binding positions include 93 to 101 (LGSGDIGSV) and Lys-118. Asp-214 (proton acceptor) is an active-site residue. The 60-residue stretch at 466–525 (EGVNWALIRSIKPPWVPKEETSHKTKGDNRSVNYYLPPRFMMSRKERNEPYHVSNYFDYF) folds into the AGC-kinase C-terminal domain.

Belongs to the protein kinase superfamily. Ser/Thr protein kinase family.

The catalysed reaction is L-seryl-[protein] + ATP = O-phospho-L-seryl-[protein] + ADP + H(+). It carries out the reaction L-threonyl-[protein] + ATP = O-phospho-L-threonyl-[protein] + ADP + H(+). Its function is as follows. Serine/threonine-protein kinase involved in the regulation of auxin signaling. Plays a minor role in the regulation of cellular auxin efflux and cotyledon organogenesis. The chain is Protein kinase PINOID 2 (PID2) from Arabidopsis thaliana (Mouse-ear cress).